We begin with the raw amino-acid sequence, 317 residues long: Glycine--tRNA ligase alpha subunit (317 aa).

This sequence belongs to the class-II aminoacyl-tRNA synthetase family. As to quaternary structure, tetramer of two alpha and two beta subunits.

It localises to the cytoplasm. The catalysed reaction is tRNA(Gly) + glycine + ATP = glycyl-tRNA(Gly) + AMP + diphosphate. This Acidovorax ebreus (strain TPSY) (Diaphorobacter sp. (strain TPSY)) protein is Glycine--tRNA ligase alpha subunit.